Reading from the N-terminus, the 337-residue chain is Ketol-acid reductoisomerase (NADP(+)) (337 aa).

The KARI N-terminal Rossmann domain occupies 1-183 (MAIETLYDSD…GGARAGVIPT (183 aa)). Residues 26–29 (YGSQ), arginine 49, serine 52, serine 54, and 84–87 (DTSQ) each bind NADP(+). The active site involves histidine 109. Glycine 135 contributes to the NADP(+) binding site. One can recognise a KARI C-terminal knotted domain in the interval 184 to 329 (TFKDETETDL…SQLRDLMSWV (146 aa)). Positions 192, 196, 228, and 232 each coordinate Mg(2+). Serine 253 is a substrate binding site.

The protein belongs to the ketol-acid reductoisomerase family. Mg(2+) serves as cofactor.

It catalyses the reaction (2R)-2,3-dihydroxy-3-methylbutanoate + NADP(+) = (2S)-2-acetolactate + NADPH + H(+). The catalysed reaction is (2R,3R)-2,3-dihydroxy-3-methylpentanoate + NADP(+) = (S)-2-ethyl-2-hydroxy-3-oxobutanoate + NADPH + H(+). The protein operates within amino-acid biosynthesis; L-isoleucine biosynthesis; L-isoleucine from 2-oxobutanoate: step 2/4. It functions in the pathway amino-acid biosynthesis; L-valine biosynthesis; L-valine from pyruvate: step 2/4. Its function is as follows. Involved in the biosynthesis of branched-chain amino acids (BCAA). Catalyzes an alkyl-migration followed by a ketol-acid reduction of (S)-2-acetolactate (S2AL) to yield (R)-2,3-dihydroxy-isovalerate. In the isomerase reaction, S2AL is rearranged via a Mg-dependent methyl migration to produce 3-hydroxy-3-methyl-2-ketobutyrate (HMKB). In the reductase reaction, this 2-ketoacid undergoes a metal-dependent reduction by NADPH to yield (R)-2,3-dihydroxy-isovalerate. This chain is Ketol-acid reductoisomerase (NADP(+)), found in Corynebacterium aurimucosum (strain ATCC 700975 / DSM 44827 / CIP 107346 / CN-1) (Corynebacterium nigricans).